We begin with the raw amino-acid sequence, 291 residues long: Pre-mRNA-splicing factor SPP381 (291 aa).

2 disordered regions span residues 1-99 and 239-266; these read MSFR…PLPR and EKEKLDHKKQRSAEKVEKSHNNNRYKIT. Polar residues-rich tracts occupy residues 28–41 and 52–62; these read QNVSLTEKSASLSH and TGKNRTPNDGQ. The span at 63-91 shows a compositional bias: acidic residues; the sequence is ESNESDGSPESDESPESEESSDNSDSSDS. Residues 239-258 show a composition bias toward basic and acidic residues; sequence EKEKLDHKKQRSAEKVEKSH.

Belongs to the SPP381 family. Component of the U4/U6-U5 tri-snRNP complex composed of the U4, U6 and U5 snRNAs and at least PRP3, PRP4, PRP6, PRP8, PRP18, PRP31, PRP38, SNU13, SNU23, SNU66, SNU114, SPP381, SMB1, SMD1, SMD2, SMD3, SMX2, SMX3, LSM2, LSM3, LSM4, LSM5, LSM6, LSM7, LSM8, BRR2 and DIB1. Interacts with PRP38.

Its subcellular location is the nucleus. Component of the spliceosome and rRNA processing machinery. In association with the spliceosomal U4/U6.U5 tri-snRNP particle, required for splicing of pre-mRNA. This Saccharomyces cerevisiae (strain ATCC 204508 / S288c) (Baker's yeast) protein is Pre-mRNA-splicing factor SPP381 (SPP381).